Consider the following 485-residue polypeptide: Glutamyl-tRNA(Gln) amidotransferase subunit A (485 aa).

Active-site charge relay system residues include Lys76 and Ser151. Ser175 functions as the Acyl-ester intermediate in the catalytic mechanism.

The protein belongs to the amidase family. GatA subfamily. In terms of assembly, heterotrimer of A, B and C subunits.

It carries out the reaction L-glutamyl-tRNA(Gln) + L-glutamine + ATP + H2O = L-glutaminyl-tRNA(Gln) + L-glutamate + ADP + phosphate + H(+). Functionally, allows the formation of correctly charged Gln-tRNA(Gln) through the transamidation of misacylated Glu-tRNA(Gln) in organisms which lack glutaminyl-tRNA synthetase. The reaction takes place in the presence of glutamine and ATP through an activated gamma-phospho-Glu-tRNA(Gln). The protein is Glutamyl-tRNA(Gln) amidotransferase subunit A of Chlorobium luteolum (strain DSM 273 / BCRC 81028 / 2530) (Pelodictyon luteolum).